Here is a 556-residue protein sequence, read N- to C-terminus: Outer spore wall assembly protein SHE10 (556 aa).

The signal sequence occupies residues 1 to 21 (MRFLTKFLLFLATVYFGLKYA). A coiled-coil region spans residues 135 to 201 (NKNLKRHVER…KQITSDVKKT (67 aa)). A compositionally biased stretch (basic and acidic residues) spans 190–208 (EAKQITSDVKKTVESEIKK). Disordered stretches follow at residues 190–263 (EAKQ…EDIT) and 534–556 (RKEAGEVNESSEEEQIVEEPISA). The segment covering 220–244 (IVSTSTIVKTITRTRHSSSSTTSTK) has biased composition (low complexity). Positions 245–256 (SAEETSEKNLET) are enriched in basic and acidic residues. The stretch at 481 to 547 (KISEFKLLLD…GEVNESSEEE (67 aa)) forms a coiled coil.

This sequence belongs to the SHE10 family. As to quaternary structure, component of the mitochondria-localized RNase mitochondrial RNA-processing (RNase MRP) composed of one single RNA encoded by the NME1 gene and at least 31 proteins. Absent in the nucleus-localized RNase MRP (NuMRP).

The protein resides in the mitochondrion. Its function is as follows. Involved in spore wall assembly. May be a component of the mitochondrial RNase MRP (MtMRP), a ribonucleoprotein endoribonuclease involved in the cleaving RNA transcripts to generate primers for DNA replication in mitochondria. In Candida glabrata (strain ATCC 2001 / BCRC 20586 / JCM 3761 / NBRC 0622 / NRRL Y-65 / CBS 138) (Yeast), this protein is Outer spore wall assembly protein SHE10.